The following is a 233-amino-acid chain: Hydroxyacylglutathione hydrolase (233 aa).

Zn(2+) is bound by residues H52, H54, D56, H57, H108, D125, and H163.

It belongs to the metallo-beta-lactamase superfamily. Glyoxalase II family. As to quaternary structure, monomer. Zn(2+) serves as cofactor.

The enzyme catalyses an S-(2-hydroxyacyl)glutathione + H2O = a 2-hydroxy carboxylate + glutathione + H(+). The protein operates within secondary metabolite metabolism; methylglyoxal degradation; (R)-lactate from methylglyoxal: step 2/2. Thiolesterase that catalyzes the hydrolysis of S-D-lactoyl-glutathione to form glutathione and D-lactic acid. In Actinobacillus succinogenes (strain ATCC 55618 / DSM 22257 / CCUG 43843 / 130Z), this protein is Hydroxyacylglutathione hydrolase.